The primary structure comprises 290 residues: 33 kDa chaperonin (290 aa).

Cystine bridges form between C236–C238 and C269–C272.

It belongs to the HSP33 family. Post-translationally, under oxidizing conditions two disulfide bonds are formed involving the reactive cysteines. Under reducing conditions zinc is bound to the reactive cysteines and the protein is inactive.

The protein localises to the cytoplasm. Functionally, redox regulated molecular chaperone. Protects both thermally unfolding and oxidatively damaged proteins from irreversible aggregation. Plays an important role in the bacterial defense system toward oxidative stress. The chain is 33 kDa chaperonin from Acholeplasma laidlawii (strain PG-8A).